A 102-amino-acid polypeptide reads, in one-letter code: Protein iss (102 aa).

Its function is as follows. Increases serum survival and confers group II surface exclusion. The chain is Protein iss (iss) from Escherichia coli.